An 87-amino-acid polypeptide reads, in one-letter code: Large ribosomal subunit protein bL27 (87 aa).

Belongs to the bacterial ribosomal protein bL27 family.

This chain is Large ribosomal subunit protein bL27, found in Wigglesworthia glossinidia brevipalpis.